Consider the following 542-residue polypeptide: Phosphoacetylglucosamine mutase 2 (542 aa).

Ser77 (phosphoserine intermediate) is an active-site residue. Mg(2+) is bound at residue Ser77. Residues Ser77 and Ser82 each carry the phosphoserine modification. Positions 292, 294, and 296 each coordinate Mg(2+). Residues Glu385 to Asn387, Arg510 to Thr514, and Arg519 each bind substrate.

The protein belongs to the phosphohexose mutase family. The cofactor is Mg(2+).

It is found in the cytoplasm. The protein localises to the nucleus. It carries out the reaction N-acetyl-alpha-D-glucosamine 1-phosphate = N-acetyl-D-glucosamine 6-phosphate. Its pathway is nucleotide-sugar biosynthesis; UDP-N-acetyl-alpha-D-glucosamine biosynthesis; N-acetyl-alpha-D-glucosamine 1-phosphate from alpha-D-glucosamine 6-phosphate (route I): step 2/2. In terms of biological role, catalyzes the conversion of GlcNAc-6-P into GlcNAc-1-P during the synthesis of uridine diphosphate/UDP-GlcNAc, which is a biosynthetic precursor of chitin and also supplies the amino sugars for N-linked oligosaccharides of glycoproteins. The polypeptide is Phosphoacetylglucosamine mutase 2 (Schizosaccharomyces pombe (strain 972 / ATCC 24843) (Fission yeast)).